The sequence spans 290 residues: 33 kDa chaperonin (290 aa).

2 disulfide bridges follow: C231–C233 and C264–C267.

This sequence belongs to the HSP33 family. In terms of processing, under oxidizing conditions two disulfide bonds are formed involving the reactive cysteines. Under reducing conditions zinc is bound to the reactive cysteines and the protein is inactive.

Its subcellular location is the cytoplasm. Redox regulated molecular chaperone. Protects both thermally unfolding and oxidatively damaged proteins from irreversible aggregation. Plays an important role in the bacterial defense system toward oxidative stress. The protein is 33 kDa chaperonin of Photorhabdus laumondii subsp. laumondii (strain DSM 15139 / CIP 105565 / TT01) (Photorhabdus luminescens subsp. laumondii).